A 337-amino-acid polypeptide reads, in one-letter code: Glyceraldehyde-3-phosphate dehydrogenase (337 aa).

NAD(+) is bound by residues Arg12–Ile13, Asp34, and Arg79. D-glyceraldehyde 3-phosphate contacts are provided by residues Ser150 to Thr152, Thr181, Thr210 to Gly211, and Arg233. The active-site Nucleophile is Cys151. Asn315 serves as a coordination point for NAD(+).

This sequence belongs to the glyceraldehyde-3-phosphate dehydrogenase family. In terms of assembly, homotetramer.

Its subcellular location is the cytoplasm. The enzyme catalyses D-glyceraldehyde 3-phosphate + phosphate + NAD(+) = (2R)-3-phospho-glyceroyl phosphate + NADH + H(+). The protein operates within carbohydrate degradation; glycolysis; pyruvate from D-glyceraldehyde 3-phosphate: step 1/5. The polypeptide is Glyceraldehyde-3-phosphate dehydrogenase (GPD) (Coccidioides posadasii (strain C735) (Valley fever fungus)).